A 267-amino-acid polypeptide reads, in one-letter code: Type III pantothenate kinase (267 aa).

6 to 13 (DSGNSRLK) serves as a coordination point for ATP. Residues Tyr96 and 103–106 (GADR) contribute to the substrate site. Asp105 serves as the catalytic Proton acceptor. Thr131 lines the ATP pocket. Substrate is bound at residue Thr181.

This sequence belongs to the type III pantothenate kinase family. In terms of assembly, homodimer. NH4(+) is required as a cofactor. The cofactor is K(+).

The protein resides in the cytoplasm. The catalysed reaction is (R)-pantothenate + ATP = (R)-4'-phosphopantothenate + ADP + H(+). It participates in cofactor biosynthesis; coenzyme A biosynthesis; CoA from (R)-pantothenate: step 1/5. Its function is as follows. Catalyzes the phosphorylation of pantothenate (Pan), the first step in CoA biosynthesis. Activates transcription of the pertussis toxin operon in a BvgAS-dependent manner. May interact with the alpha subunit of RNA polymerase. In Bordetella pertussis (strain Tohama I / ATCC BAA-589 / NCTC 13251), this protein is Type III pantothenate kinase (coaX).